The sequence spans 489 residues: Cytochrome P450 2C3 (489 aa).

Cys-434 provides a ligand contact to heme.

This sequence belongs to the cytochrome P450 family. It depends on heme as a cofactor.

Its subcellular location is the endoplasmic reticulum membrane. The protein localises to the microsome membrane. The catalysed reaction is an organic molecule + reduced [NADPH--hemoprotein reductase] + O2 = an alcohol + oxidized [NADPH--hemoprotein reductase] + H2O + H(+). Cytochromes P450 are a group of heme-thiolate monooxygenases. In liver microsomes, this enzyme is involved in an NADPH-dependent electron transport pathway. It oxidizes a variety of structurally unrelated compounds, including steroids, fatty acids, and xenobiotics. This chain is Cytochrome P450 2C3 (CYP2C3), found in Oryctolagus cuniculus (Rabbit).